Consider the following 367-residue polypeptide: UDP-N-acetylglucosamine--N-acetylmuramyl-(pentapeptide) pyrophosphoryl-undecaprenol N-acetylglucosamine transferase (367 aa).

UDP-N-acetyl-alpha-D-glucosamine is bound by residues 21 to 23, Asn-129, Arg-170, Ser-198, and Gln-295; that span reads TGG.

Belongs to the glycosyltransferase 28 family. MurG subfamily.

The protein resides in the cell inner membrane. The enzyme catalyses di-trans,octa-cis-undecaprenyl diphospho-N-acetyl-alpha-D-muramoyl-L-alanyl-D-glutamyl-meso-2,6-diaminopimeloyl-D-alanyl-D-alanine + UDP-N-acetyl-alpha-D-glucosamine = di-trans,octa-cis-undecaprenyl diphospho-[N-acetyl-alpha-D-glucosaminyl-(1-&gt;4)]-N-acetyl-alpha-D-muramoyl-L-alanyl-D-glutamyl-meso-2,6-diaminopimeloyl-D-alanyl-D-alanine + UDP + H(+). It functions in the pathway cell wall biogenesis; peptidoglycan biosynthesis. Its function is as follows. Cell wall formation. Catalyzes the transfer of a GlcNAc subunit on undecaprenyl-pyrophosphoryl-MurNAc-pentapeptide (lipid intermediate I) to form undecaprenyl-pyrophosphoryl-MurNAc-(pentapeptide)GlcNAc (lipid intermediate II). This Synechococcus sp. (strain JA-2-3B'a(2-13)) (Cyanobacteria bacterium Yellowstone B-Prime) protein is UDP-N-acetylglucosamine--N-acetylmuramyl-(pentapeptide) pyrophosphoryl-undecaprenol N-acetylglucosamine transferase.